A 572-amino-acid polypeptide reads, in one-letter code: Proline--tRNA ligase (572 aa).

The protein belongs to the class-II aminoacyl-tRNA synthetase family. ProS type 1 subfamily. As to quaternary structure, homodimer.

Its subcellular location is the cytoplasm. It catalyses the reaction tRNA(Pro) + L-proline + ATP = L-prolyl-tRNA(Pro) + AMP + diphosphate. Its function is as follows. Catalyzes the attachment of proline to tRNA(Pro) in a two-step reaction: proline is first activated by ATP to form Pro-AMP and then transferred to the acceptor end of tRNA(Pro). As ProRS can inadvertently accommodate and process non-cognate amino acids such as alanine and cysteine, to avoid such errors it has two additional distinct editing activities against alanine. One activity is designated as 'pretransfer' editing and involves the tRNA(Pro)-independent hydrolysis of activated Ala-AMP. The other activity is designated 'posttransfer' editing and involves deacylation of mischarged Ala-tRNA(Pro). The misacylated Cys-tRNA(Pro) is not edited by ProRS. The chain is Proline--tRNA ligase from Caldicellulosiruptor saccharolyticus (strain ATCC 43494 / DSM 8903 / Tp8T 6331).